The sequence spans 278 residues: Elongation factor Ts (278 aa).

Residues 80–83 (TDFV) form an involved in Mg(2+) ion dislocation from EF-Tu region.

Belongs to the EF-Ts family.

It is found in the cytoplasm. Functionally, associates with the EF-Tu.GDP complex and induces the exchange of GDP to GTP. It remains bound to the aminoacyl-tRNA.EF-Tu.GTP complex up to the GTP hydrolysis stage on the ribosome. This chain is Elongation factor Ts, found in Arthrobacter sp. (strain FB24).